The primary structure comprises 1681 residues: Probable clathrin heavy chain 1 (1681 aa).

WD40-like repeat stretches follow at residues 22–65 (NITF…RPIS), 66–105 (ADSV…NVED), 106–147 (VVYW…QSLA), 148–193 (GTQI…QPIE), 194–255 (GHAA…ADTA), 256–299 (GDFP…ISTD), and 300–328 (TVFV…VSID). CHCR repeat units lie at residues 539–685 (SENG…QVVV), 688–830 (ASKY…SEDA), 835–974 (IINT…QLID), 981–1126 (LSET…VKEA), 1130–1271 (FIKA…FRLA), 1276–1422 (LHIV…LLLN), and 1425–1568 (LTVL…YDCF). The segment covering 1616-1628 (ERSEHERKEEKAE) has biased composition (basic and acidic residues). Residues 1616–1635 (ERSEHERKEEKAEQQQNNGM) form a disordered region.

Belongs to the clathrin heavy chain family. As to quaternary structure, clathrin triskelions, composed of 3 heavy chains and 3 light chains, are the basic subunits of the clathrin coat. May interact with beta arrestin arr-1.

The protein localises to the cytoplasmic vesicle membrane. The protein resides in the membrane. It localises to the coated pit. Its function is as follows. Clathrin is the major protein of the polyhedral coat of coated pits and vesicles. May play a role in yolk protein clatherin-mediated endocytosis by oocytes during oogenesis. This is Probable clathrin heavy chain 1 (chc-1) from Caenorhabditis elegans.